A 1300-amino-acid chain; its full sequence is MNKIYSLKYSHITGGLIAVSELSGRVSSRATGKKKHKRILALCFLGLLQSSYSFASQMDISNFYIRDYMDFAQNKGIFQAGATNIEIVKKDGSTLKLPEVPFPDFSPVANKGSTTSIGGAYSITATHNTKNHHSVATQNWGNSTYKQTDWNTSHPDFAVSRLDKFVVETRGATEGADISLSKQQALERYGVNYKGEKKLIAFRAGSGVVSVKKNGRITPFNEVSYKPEMLNGSFVHIDDWSGWLILTNNQFDEFNNIASQGDSGSALFVYDNQKKKWVVAGTVWGIYNYANGKNHAAYSKWNQTTIDNLKNKYSYNVDMSGAQVATIENGKLTGTGSDTTDIKNKDLIFTGGGDILLKSSFDNGAGGLVFNDKKTYRVNGDDFTFKGAGVDTRNGSTVEWNIRYDNKDNLHKIGDGTLDVRKTQNTNLKTGEGLVILGAEKTFNNIYITSGDGTVRLNAENALSGGEYNGIFFAKNGGTLDLNGYNQSFNKIAATDSGAVITNTSTKKSILSLNNTADYIYHGNINGNLDVLQHHETKKENRRLILDGGVDTTNDISLRNTQLSMQGHATEHAIYRDGAFSCSLPAPMRFLCGSDYVAGMQNTEADAVKQNGNAYKTNNAVSDLSQPDWETGTFRFGTLHLENSDFSVGRNANVIGDIQASKSNITIGDTTAYIDLHAGKNITGDGFGFRQNIVRGNSQGETLFTGGITAEDSTIVIKDKAKALFSNYVYLLNTKATIENGADVTTQSGMFSTSDISISGNLSMTGNPDKDNKFEPSIYLNDASYLLTDDSARLVAKNKASVVGDIHSTKSASIMFGHDESDLSQLSDRTSKGLALGLLGGFDVSYRGSVNAPSASATMNNTWWQLTGDSALKTLKSTNSMVYFTDSANNKKFHTLTVDELATSNSAYAMRTNLSESDKLEVKKHLSGENNILLVDFLQKPTPEKQLNIELVSAPKDTNENVFKASKQTIGFSDVTPVITTRETDDKITWSLTGYNTVANKEATRNAAALFSVDYKAFLNEVNNLNKRMGDLRDINGEAGAWARIMSGTGSASGGFSDNYTHVQVGVDKKHELDGLDLFTGFTVTHTDSSASADVFSGKTKSVGAGLYASAMVDSGAYIDLIGKYVHHDNEYTATFAGLGTRDYSTHSWYAGAEAGYRYHVTEDAWIEPQAELVYGSVSGKQFAWKDQGMHLSMKDKDYNPLIGRTGVDVGKSFSGKDWKVTARAGLGYQFDLLANGETVLRDASGEKRIKGEKDSRMLMSVGLNAEIRDNVRFGLEFEKSAFGKYNVDNAVNANFRYSF.

An N-terminal signal peptide occupies residues 1–55; that stretch reads MNKIYSLKYSHITGGLIAVSELSGRVSSRATGKKKHKRILALCFLGLLQSSYSFA. The Peptidase S6 domain occupies 57 to 311; sequence QMDISNFYIR…NQTTIDNLKN (255 aa). Catalysis depends on charge relay system residues His-127, Asp-156, and Ser-263. The region spanning 1034–1300 is the Autotransporter domain; sequence DINGEAGAWA…AVNANFRYSF (267 aa).

Post-translationally, cleaved to release the mature protein from the outer membrane.

It is found in the periplasm. Its subcellular location is the secreted. It localises to the cell surface. The protein resides in the cell outer membrane. Its function is as follows. Serine protease with cytotoxic effect. Disrupts actin cytoskeleton resulting cell detachment in vitro. In Escherichia coli, this protein is Serine protease EspP (espP).